The primary structure comprises 475 residues: Ribosomal RNA small subunit methyltransferase F (475 aa).

S-adenosyl-L-methionine contacts are provided by residues 125–131 (AAAPGSK), E149, D176, and D194. Residue C247 is the Nucleophile of the active site.

This sequence belongs to the class I-like SAM-binding methyltransferase superfamily. RsmB/NOP family.

The protein resides in the cytoplasm. It catalyses the reaction cytidine(1407) in 16S rRNA + S-adenosyl-L-methionine = 5-methylcytidine(1407) in 16S rRNA + S-adenosyl-L-homocysteine + H(+). Specifically methylates the cytosine at position 1407 (m5C1407) of 16S rRNA. This is Ribosomal RNA small subunit methyltransferase F from Aeromonas hydrophila subsp. hydrophila (strain ATCC 7966 / DSM 30187 / BCRC 13018 / CCUG 14551 / JCM 1027 / KCTC 2358 / NCIMB 9240 / NCTC 8049).